Here is a 142-residue protein sequence, read N- to C-terminus: MALSAEDRALVRALWKKLGSNVGVYTTEALERTFLAFPATKTYFSHLDLSPGSSQVRAHGQKVADALSLAVERLDDLPHALSALSHLHACQLRVDPASFQLLGHCLLVTLARHYPGDFSPALQASLDKFLSHVISALASEYR.

One can recognise a Globin domain in the interval 2–142 (ALSAEDRALV…VISALASEYR (141 aa)). Residues His-59 and His-88 each contribute to the heme b site.

This sequence belongs to the globin family.

In Pongo pygmaeus (Bornean orangutan), this protein is Hemoglobin subunit theta-1 (HBQ1).